The chain runs to 626 residues: Serine/threonine-protein kinase ATG1a (626 aa).

The 259-residue stretch at 10–268 (YALGPRIGSG…FREFFNHMFL (259 aa)) folds into the Protein kinase domain. ATP is bound by residues 16 to 24 (IGSGSFAVV) and Lys-39. The active-site Proton acceptor is the Asp-132. Residues 288–308 (KSLLPSAQPSTSTNRFKSSAE) show a composition bias toward polar residues. Positions 288-347 (KSLLPSAQPSTSTNRFKSSAENVHKHGSSSSASNSQISMPHTSFEKTRKDTEGQCSSNQS) are disordered. Residues 315–325 (SSSSASNSQIS) show a composition bias toward low complexity. The span at 330-339 (SFEKTRKDTE) shows a compositional bias: basic and acidic residues. The short motif at 360-363 (YVLV) is the AIM (Atg8-family-interacting motif) element.

The protein belongs to the protein kinase superfamily. Ser/Thr protein kinase family. Interacts with ATG13A. Interacts with ATG8E. Binds to ATG8E on autophagic vesicles. Post-translationally, phosphorylated during nutrient starvation. Dephosphorylated in nutrient-rich conditions.

It localises to the cytoplasmic vesicle. The protein resides in the autophagosome. Serine/threonine protein kinase involved in autophagy in a nutritional condition-dependent manner. The ATG1-ATG13 protein kinase complex regulates downstream events required for autophagosome enclosure and/or vacuolar delivery. Becomes a target of autophagy under nutrient starvation. Connects autophagy to plant nutritional status. This is Serine/threonine-protein kinase ATG1a from Arabidopsis thaliana (Mouse-ear cress).